Consider the following 213-residue polypeptide: Na(+)-translocating NADH-quinone reductase subunit E (213 aa).

The next 6 membrane-spanning stretches (helical) occupy residues 12 to 32 (AVFV…FLAV), 40 to 60 (IGLG…NQLI), 92 to 112 (FLGF…LEMF), 124 to 144 (LGIF…SLFM), 155 to 175 (VVFG…LAGI), and 191 to 211 (LGIT…FSGI).

The protein belongs to the NqrDE/RnfAE family. Composed of six subunits; NqrA, NqrB, NqrC, NqrD, NqrE and NqrF.

The protein localises to the cell inner membrane. The enzyme catalyses a ubiquinone + n Na(+)(in) + NADH + H(+) = a ubiquinol + n Na(+)(out) + NAD(+). Its function is as follows. NQR complex catalyzes the reduction of ubiquinone-1 to ubiquinol by two successive reactions, coupled with the transport of Na(+) ions from the cytoplasm to the periplasm. NqrA to NqrE are probably involved in the second step, the conversion of ubisemiquinone to ubiquinol. This is Na(+)-translocating NADH-quinone reductase subunit E from Rhodopirellula baltica (strain DSM 10527 / NCIMB 13988 / SH1).